Reading from the N-terminus, the 435-residue chain is Serine--tRNA ligase (435 aa).

Position 238–240 (238–240 (TAE)) interacts with L-serine. 269–271 (RKE) is a binding site for ATP. An L-serine-binding site is contributed by Glu-292. 356-359 (EISS) provides a ligand contact to ATP. Ser-391 serves as a coordination point for L-serine.

This sequence belongs to the class-II aminoacyl-tRNA synthetase family. Type-1 seryl-tRNA synthetase subfamily. In terms of assembly, homodimer. The tRNA molecule binds across the dimer.

The protein resides in the cytoplasm. It carries out the reaction tRNA(Ser) + L-serine + ATP = L-seryl-tRNA(Ser) + AMP + diphosphate + H(+). The catalysed reaction is tRNA(Sec) + L-serine + ATP = L-seryl-tRNA(Sec) + AMP + diphosphate + H(+). It participates in aminoacyl-tRNA biosynthesis; selenocysteinyl-tRNA(Sec) biosynthesis; L-seryl-tRNA(Sec) from L-serine and tRNA(Sec): step 1/1. Its function is as follows. Catalyzes the attachment of serine to tRNA(Ser). Is also able to aminoacylate tRNA(Sec) with serine, to form the misacylated tRNA L-seryl-tRNA(Sec), which will be further converted into selenocysteinyl-tRNA(Sec). This Leuconostoc mesenteroides subsp. mesenteroides (strain ATCC 8293 / DSM 20343 / BCRC 11652 / CCM 1803 / JCM 6124 / NCDO 523 / NBRC 100496 / NCIMB 8023 / NCTC 12954 / NRRL B-1118 / 37Y) protein is Serine--tRNA ligase.